The following is a 347-amino-acid chain: Violet-sensitive opsin (347 aa).

The Extracellular segment spans residues 1 to 31 (MLEEEDFYLFKNVSNVSPFDGPQYHIAPKWA). An N-linked (GlcNAc...) asparagine glycan is attached at N12. Residues 32 to 56 (FTLQAIFMGMVFLIGTPLNFIVLLV) form a helical membrane-spanning segment. Residues 57-68 (TIKYKKLRQPLN) are Cytoplasmic-facing. The helical transmembrane segment at 69-94 (YILVNITVGGFLMCIFSIFPVFVSSS) threads the bilayer. Residues 95-108 (QGYFFFGRIACSID) are Extracellular-facing. C105 and C182 are oxidised to a cystine. A helical transmembrane segment spans residues 109-128 (AFVGTLTGLVTGWSLAFLAF). Residues 129–147 (ERYIVICKPMGNFNFSSSH) are Cytoplasmic-facing. A helical membrane pass occupies residues 148–171 (ALAVVICTWIIGIVVSVPPFLGWS). At 172 to 197 (RYMPEGLQCSCGPDWYTVGTKYRSEY) the chain is on the extracellular side. Residues 198 to 225 (YTWFIFIFCFVIPLSLICFSYGRLLGAL) traverse the membrane as a helical segment. Residues 226–247 (RAVAAQQQESASTQKAEREVSR) are Cytoplasmic-facing. A helical transmembrane segment spans residues 248–271 (MVIFMVGSFCLCYVPYAAMAMYMV). Residues 272–279 (TNRNHGLD) lie on the Extracellular side of the membrane. A helical membrane pass occupies residues 280–304 (LRLVTIPAFFSKSSCVYNPIIYSFM). At K291 the chain carries N6-(retinylidene)lysine. Residues 305–347 (NKQFRGCIMETVCGRPMSDDSSVSSTSQRTEVSTVSSSQVSPA) are Cytoplasmic-facing. The disordered stretch occupies residues 323–347 (DDSSVSSTSQRTEVSTVSSSQVSPA).

This sequence belongs to the G-protein coupled receptor 1 family. Opsin subfamily. Post-translationally, phosphorylated on some or all of the serine and threonine residues present in the C-terminal region. As to expression, the color pigments are found in the cone photoreceptor cells.

It is found in the membrane. In terms of biological role, visual pigments are the light-absorbing molecules that mediate vision. They consist of an apoprotein, opsin, covalently linked to cis-retinal. This chain is Violet-sensitive opsin, found in Xenopus laevis (African clawed frog).